A 348-amino-acid chain; its full sequence is Anthranilate phosphoribosyltransferase (348 aa).

Residues Gly-80, 83-84, Thr-88, 90-93, 108-116, and Ser-120 each bind 5-phospho-alpha-D-ribose 1-diphosphate; these read GD, NVST, and KHGNRSVSS. Gly-80 contributes to the anthranilate binding site. A Mg(2+)-binding site is contributed by Ser-92. Anthranilate is bound at residue Asn-111. An anthranilate-binding site is contributed by Arg-166. Mg(2+) contacts are provided by Asp-224 and Glu-225.

The protein belongs to the anthranilate phosphoribosyltransferase family. Homodimer. Requires Mg(2+) as cofactor.

It carries out the reaction N-(5-phospho-beta-D-ribosyl)anthranilate + diphosphate = 5-phospho-alpha-D-ribose 1-diphosphate + anthranilate. Its pathway is amino-acid biosynthesis; L-tryptophan biosynthesis; L-tryptophan from chorismate: step 2/5. Its function is as follows. Catalyzes the transfer of the phosphoribosyl group of 5-phosphorylribose-1-pyrophosphate (PRPP) to anthranilate to yield N-(5'-phosphoribosyl)-anthranilate (PRA). The polypeptide is Anthranilate phosphoribosyltransferase (Sorangium cellulosum (strain So ce56) (Polyangium cellulosum (strain So ce56))).